Reading from the N-terminus, the 199-residue chain is Transcription factor 15 (199 aa).

The segment at 25–67 is disordered; sequence EENRSESDASDQSFGCCEGPEAARRGPGPGGGRRAGGGGGAGP. Positions 51–66 are enriched in gly residues; that stretch reads PGPGGGRRAGGGGGAG. The bHLH domain maps to 72 to 124; sequence RQRQAANARERDRTQSVNTAFTALRTLIPTEPVDRKLSKIETVRLASSYIAHL.

As to quaternary structure, heterodimer; efficient DNA binding requires dimerization with another bHLH protein, such as TCF3/E12. Interacts with MEOX2.

It localises to the nucleus. In terms of biological role, early transcription factor that plays a key role in somitogenesis, paraxial mesoderm development and regulation of stem cell pluripotency. Essential for the mesenchymal to epithelial transition associated with somite formation. Required for somite morphogenesis, thereby regulating patterning of the axial skeleton and skeletal muscles. Required for proper localization of somite epithelium markers during the mesenchymal to epithelial transition. Also plays a key role in regulation of stem cell pluripotency. Promotes pluripotency exit of embryonic stem cells (ESCs) by priming ESCs for differentiation. Acts as a key regulator of self-renewal of hematopoietic stem cells (HSCs) by mediating HSCs quiescence and long-term self-renewal. Together with MEOX2, regulates transcription in heart endothelial cells to regulate fatty acid transport across heart endothelial cells. Acts by forming a heterodimer with another helix-loop-helix (bHLH) protein, such as TCF3/E12, that binds DNA on E-box motifs (5'-CANNTG-3') and activates transcription of target genes. The chain is Transcription factor 15 from Homo sapiens (Human).